We begin with the raw amino-acid sequence, 475 residues long: tRNA-2-methylthio-N(6)-dimethylallyladenosine synthase (475 aa).

The tract at residues 1–21 is disordered; sequence MTTAPTSPALPASSDTAPTGP. The MTTase N-terminal domain occupies 24 to 145; the sequence is RGLHVITWGC…LPEMVARAAR (122 aa). [4Fe-4S] cluster-binding residues include cysteine 33, cysteine 69, cysteine 108, cysteine 186, cysteine 190, and cysteine 193. The 233-residue stretch at 172–404 folds into the Radical SAM core domain; that stretch reads TQGNLTAFLT…QALLREQQDA (233 aa). The TRAM domain maps to 407-469; it reads ADMVGTVQEI…TNSLGGTLIR (63 aa).

Belongs to the methylthiotransferase family. MiaB subfamily. Monomer. The cofactor is [4Fe-4S] cluster.

Its subcellular location is the cytoplasm. It catalyses the reaction N(6)-dimethylallyladenosine(37) in tRNA + (sulfur carrier)-SH + AH2 + 2 S-adenosyl-L-methionine = 2-methylsulfanyl-N(6)-dimethylallyladenosine(37) in tRNA + (sulfur carrier)-H + 5'-deoxyadenosine + L-methionine + A + S-adenosyl-L-homocysteine + 2 H(+). Catalyzes the methylthiolation of N6-(dimethylallyl)adenosine (i(6)A), leading to the formation of 2-methylthio-N6-(dimethylallyl)adenosine (ms(2)i(6)A) at position 37 in tRNAs that read codons beginning with uridine. This chain is tRNA-2-methylthio-N(6)-dimethylallyladenosine synthase, found in Gluconobacter oxydans (strain 621H) (Gluconobacter suboxydans).